The sequence spans 124 residues: Small ribosomal subunit protein uS11 (124 aa).

It belongs to the universal ribosomal protein uS11 family. In terms of assembly, part of the 30S ribosomal subunit.

Its function is as follows. Located on the platform of the 30S subunit. This chain is Small ribosomal subunit protein uS11, found in Methanococcus aeolicus (strain ATCC BAA-1280 / DSM 17508 / OCM 812 / Nankai-3).